Consider the following 1077-residue polypeptide: ATP-dependent DNA helicase MPH1 (1077 aa).

The Helicase ATP-binding domain maps to 99–266 (IVHRALFENV…EVVDNLQISK (168 aa)). Residue 112–119 (IPTGMGKT) coordinates ATP. Residues 214-217 (DEAH) carry the DEAH box motif. Residues 511-660 (KKVDRIRRLE…SLNYKVTDRI (150 aa)) form the Helicase C-terminal domain. Disordered stretches follow at residues 536-556 (EKLA…ISGM) and 831-859 (TLSS…PKRQ). Positions 831–841 (TLSSDNKSTPD) are enriched in polar residues.

Belongs to the DEAD box helicase family. DEAH subfamily. FANCM sub-subfamily. Interacts with the MHF histone-fold complex to form the FANCM-MHF complex.

Its subcellular location is the nucleus. The enzyme catalyses ATP + H2O = ADP + phosphate + H(+). ATP-dependent DNA helicase involved in DNA damage repair by homologous recombination and in genome maintenance. Capable of unwinding D-loops. Plays a role in limiting crossover recombinants during mitotic DNA double-strand break (DSB) repair. Component of a FANCM-MHF complex which promotes gene conversion at blocked replication forks, probably by reversal of the stalled fork. The protein is ATP-dependent DNA helicase MPH1 of Eremothecium gossypii (strain ATCC 10895 / CBS 109.51 / FGSC 9923 / NRRL Y-1056) (Yeast).